Consider the following 134-residue polypeptide: Snaclec alboaggregin-A subunit alpha' (134 aa).

The C-type lectin domain maps to 1–134 (DFHCLPGWSA…NPFVCKFPPQ (134 aa)). 3 cysteine pairs are disulfide-bonded: Cys4/Cys15, Cys32/Cys129, and Cys104/Cys121.

It belongs to the snaclec family. As to quaternary structure, heterotetramer of the subunits alpha, alpha', beta and beta'; disulfide-linked. Expressed by the venom gland.

It localises to the secreted. In terms of biological role, potent platelet activator that aggregates platelets via both GPIbalpha (GP1BA) and GPVI (GP6). Induces a tyrosine phosphorylation profile in platelets that resembles this produced by collagen, involving the time dependent tyrosine phosphorylation of Fc receptor gamma chain (FCGR1A), phospholipase Cgamma2 (PLCG2), and LAT. This is Snaclec alboaggregin-A subunit alpha' from Trimeresurus albolabris (White-lipped pit viper).